The sequence spans 315 residues: Heterodimeric geranylgeranyl pyrophosphate synthase small subunit 1, chloroplastic (315 aa).

Mg(2+)-binding residues include Asp-124 and Gly-130. Dimethylallyl diphosphate-binding residues include Lys-228, Gln-265, and Lys-280.

This sequence belongs to the FPP/GGPP synthase family. In terms of assembly, part of a heterodimeric geranyl(geranyl)diphosphate synthase. Mg(2+) is required as a cofactor. In terms of tissue distribution, mainly expressed in trichomes, and, to a lower extent, in roots, leaves, flowers and stems.

It localises to the plastid. Its subcellular location is the chloroplast thylakoid membrane. The protein resides in the chloroplast. Functionally, heterodimeric geranyl(geranyl)-diphosphate (GPP) synthase small subunit. The small subunit alone is inactive in vitro while the large subunit GGPPS1 catalyzes mainly the production of geranygeranyl-diphosphate in vitro. Upon association of the two subunits, the product profile changes and the production of gerany-diphosphate is strongly increased. The chain is Heterodimeric geranylgeranyl pyrophosphate synthase small subunit 1, chloroplastic from Cannabis sativa (Hemp).